Consider the following 669-residue polypeptide: Myb-like protein M (669 aa).

The interval 27–69 is disordered; it reads DPSLMDDEFSDNEYDLSPKDDVPSPSKRGRGQIQNGIRRSPNK. Acidic residues predominate over residues 30-40; that stretch reads LMDDEFSDNEY. 2 HTH myb-type domains span residues 60-118 and 119-170; these read QNGI…SPDI and RKGP…SREV. 2 consecutive DNA-binding regions (H-T-H motif) follow at residues 90–114 and 142–166; these read WKRISAEMGGQKTGAQCAQHWKRVL and WKKIAKRICKRTDIQCRYQYLKSLQ. Residues 172-223 enclose the Myb-like domain; the sequence is WVPKEDEVLVKKVDEMGENLSWLEVSEYLAKLKHTNTLRTALECKTRYLQLT. Disordered regions lie at residues 226–530 and 550–636; these read GGSI…EDNG and IKNK…PHQS. Composition is skewed to low complexity over residues 234–382, 389–415, and 450–464; these read NQSN…SSPS, NNNNNNNNNNNNNNNNNNNNNNNNSNN, and PTSLTLPSSTLSSPS. A compositionally biased stretch (polar residues) spans 465–482; sequence CNNSIRQPSPSPSIKTFK. Composition is skewed to low complexity over residues 483 to 521, 555 to 593, and 611 to 636; these read STIVSTPSRPSPSSSTNSAFSINNIIDSENNNNNNNNDN, NNNNNNNNNNNNNNNNNNNNNNNNNNNNGNNTLSYNSDN, and SNFKNHNNNQSNTSPMSSPISSPHQS.

The protein localises to the nucleus. The polypeptide is Myb-like protein M (mybM) (Dictyostelium discoideum (Social amoeba)).